A 179-amino-acid polypeptide reads, in one-letter code: MSKDLEVAGRYANALFQVAQDKDLVDVFSEELTELKAALNANKDFVKLLENPTFTTEQKKNLASAVFEKINPTLRDFIYLLIDRNREDYLSVIADVYQKRVNDLRGVADADVYSVIPLSEQELTALSRVFAAKMNKTKLNIQNHIDKSLLGGVKVVIGTRIYDDSLKTKLKDMERQIKA.

This sequence belongs to the ATPase delta chain family. As to quaternary structure, F-type ATPases have 2 components, F(1) - the catalytic core - and F(0) - the membrane proton channel. F(1) has five subunits: alpha(3), beta(3), gamma(1), delta(1), epsilon(1). F(0) has three main subunits: a(1), b(2) and c(10-14). The alpha and beta chains form an alternating ring which encloses part of the gamma chain. F(1) is attached to F(0) by a central stalk formed by the gamma and epsilon chains, while a peripheral stalk is formed by the delta and b chains.

The protein resides in the cell membrane. Its function is as follows. F(1)F(0) ATP synthase produces ATP from ADP in the presence of a proton or sodium gradient. F-type ATPases consist of two structural domains, F(1) containing the extramembraneous catalytic core and F(0) containing the membrane proton channel, linked together by a central stalk and a peripheral stalk. During catalysis, ATP synthesis in the catalytic domain of F(1) is coupled via a rotary mechanism of the central stalk subunits to proton translocation. In terms of biological role, this protein is part of the stalk that links CF(0) to CF(1). It either transmits conformational changes from CF(0) to CF(1) or is implicated in proton conduction. In Listeria welshimeri serovar 6b (strain ATCC 35897 / DSM 20650 / CCUG 15529 / CIP 8149 / NCTC 11857 / SLCC 5334 / V8), this protein is ATP synthase subunit delta.